Consider the following 331-residue polypeptide: ADP,ATP carrier protein 2, mitochondrial (331 aa).

Solcar repeat units lie at residues 29-122 (KNFA…FKRM), 134-226 (KWFG…LKPV), and 238-320 (ASFA…LQIL). 5 helical membrane passes run 31–58 (FAID…VKLL), 99–123 (TANV…KRMF), 132–152 (YWKW…SSLF), 202–223 (FNIS…YDSL), and 237–257 (FASF…SYPI). The ADP site is built by Arg104 and Lys116. An ADP-binding site is contributed by Arg261. Positions 261–266 (RRRMMM) are important for transport activity. The Nucleotide carrier signature motif motif lies at 261–266 (RRRMMM). Residues 297–317 (AGANILRAIAGAGVLSGYDQL) form a helical membrane-spanning segment.

The protein belongs to the mitochondrial carrier (TC 2.A.29) family. Monomer.

It localises to the mitochondrion inner membrane. It catalyses the reaction ADP(in) + ATP(out) = ADP(out) + ATP(in). The matrix-open state (m-state) is inhibited by the membrane-permeable bongkrekic acid (BKA). The cytoplasmic-open state (c-state) is inhibited by the membrane-impermeable toxic inhibitor carboxyatractyloside (CATR). ADP:ATP antiporter that mediates import of ADP into the mitochondrial matrix for ATP synthesis, and export of ATP out to fuel the cell. Cycles between the cytoplasmic-open state (c-state) and the matrix-open state (m-state): operates by the alternating access mechanism with a single substrate-binding site intermittently exposed to either the cytosolic (c-state) or matrix (m-state) side of the inner mitochondrial membrane. The sequence is that of ADP,ATP carrier protein 2, mitochondrial (ANT-G2) from Triticum aestivum (Wheat).